The chain runs to 460 residues: DNA repair protein RadA (460 aa).

A C4-type zinc finger spans residues 11–28 (CNECGADYPRWQGQCSAC). 102-109 (GNPGAGKS) lines the ATP pocket. Residues 258-262 (KNRFG) carry the RadA KNRFG motif motif. Positions 357-460 (DVFVNVVGGV…ADALSVFDDL (104 aa)) are lon-protease-like.

The protein belongs to the RecA family. RadA subfamily.

Functionally, DNA-dependent ATPase involved in processing of recombination intermediates, plays a role in repairing DNA breaks. Stimulates the branch migration of RecA-mediated strand transfer reactions, allowing the 3' invading strand to extend heteroduplex DNA faster. Binds ssDNA in the presence of ADP but not other nucleotides, has ATPase activity that is stimulated by ssDNA and various branched DNA structures, but inhibited by SSB. Does not have RecA's homology-searching function. The polypeptide is DNA repair protein RadA (Salmonella typhimurium (strain LT2 / SGSC1412 / ATCC 700720)).